A 733-amino-acid polypeptide reads, in one-letter code: Microtubule-associated protein tau (733 aa).

Basic and acidic residues predominate over residues 1–16 (MADPRQEFDTMEDHAG). Residues 1-548 (MADPRQEFDT…PVPMPDLKNV (548 aa)) are disordered. An N-acetylalanine modification is found at alanine 2. Position 18 is a phosphotyrosine; by FYN (tyrosine 18). Lysine 33 is covalently cross-linked (Glycyl lysine isopeptide (Lys-Gly) (interchain with G-Cter in ubiquitin)). A phosphoserine mark is found at serine 35 and serine 50. The span at 50–60 (SETSDAKSTPT) shows a compositional bias: polar residues. Threonine 58, threonine 60, and threonine 100 each carry phosphothreonine. Arginine 115 carries the omega-N-methylarginine modification. Residues 126-137 (SDWTRQQVSSMS) show a composition bias toward polar residues. Positions 157–172 (RPEDIEKSHPASELLR) are enriched in basic and acidic residues. The residue at position 188 (serine 188) is a Phosphoserine. The segment covering 189-202 (EEEVDEDLTVDESS) has biased composition (acidic residues). Residues 203–212 (QDSPPSQASL) show a composition bias toward polar residues. 2 stretches are compositionally biased toward basic and acidic residues: residues 270 to 294 (EEGHEAAPEFTFHVEIKASTPKEQD) and 354 to 366 (ASKDRTGNDEKKA). Positions 413 to 427 (KHVSSVTPRNGSPGT) are enriched in polar residues. Threonine 445 bears the Phosphothreonine mark. Arginine 447 is modified (omega-N-methylarginine). The residue at position 451 (serine 451) is a Phosphoserine. The residue at position 455 (lysine 455) is an N6,N6-dimethyllysine; alternate. Residue lysine 455 is modified to N6-acetyllysine; alternate. Threonine 461, threonine 467, and threonine 468 each carry phosphothreonine. Serine 470 is subject to Phosphoserine. A Phosphothreonine modification is found at threonine 473. Serine 477, serine 483, and serine 487 each carry phosphoserine. Positions 479–506 (EPPKSGERSGYSSPGSPGTPGSRSRTPS) are enriched in low complexity. Residue tyrosine 489 is modified to Phosphotyrosine. A phosphoserine mark is found at serine 490, serine 491, and serine 494. Phosphothreonine is present on residues threonine 497 and threonine 504. Residue serine 506 is modified to Phosphoserine. Position 509 is a phosphothreonine (threonine 509). Lysine 517 is modified (N6-acetyllysine). Phosphothreonine is present on threonine 523. A phosphoserine mark is found at serine 527, serine 529, and serine 531. Tau/MAP repeat units lie at residues 536–566 (QTAPVPMPDLKNVRSKIGSTENLKHQPGGGK), 567–597 (VQIINKKLDLSNVQSKCGSKDNIKHVPGGGS), 598–628 (VQIVYKPVDLSKVTSKCGSLGNIHHKPGGGQ), and 629–660 (VEVKSEKLDFKDRVQSKIGSLDNITHVPGGGN). A Glycyl lysine isopeptide (Lys-Gly) (interchain with G-Cter in ubiquitin) cross-link involves residue lysine 546. Lysine 551 carries the post-translational modification N6-acetyllysine; alternate. Lysine 551 carries the post-translational modification N6-methyllysine; alternate. Lysine 551 is covalently cross-linked (Glycyl lysine isopeptide (Lys-Gly) (interchain with G-Cter in ubiquitin); alternate). At serine 554 the chain carries Phosphoserine; by MARK1, BRSK1, BRSK2 and PHK. Residue lysine 559 forms a Glycyl lysine isopeptide (Lys-Gly) (interchain with G-Cter in ubiquitin) linkage. N6-acetyllysine; alternate is present on lysine 573. A Glycyl lysine isopeptide (Lys-Gly) (interchain with G-Cter in ubiquitin); alternate cross-link involves residue lysine 573. Phosphoserine is present on residues serine 577 and serine 581. Lysine 582 carries the N6-acetyllysine modification. Cysteine 583 and cysteine 614 are oxidised to a cystine. A Phosphoserine modification is found at serine 585. Lysine 590 is modified (N6-acetyllysine; alternate). Lysine 590 participates in a covalent cross-link: Glycyl lysine isopeptide (Lys-Gly) (interchain with G-Cter in ubiquitin); alternate. A Phosphoserine modification is found at serine 597. At lysine 603 the chain carries N6,N6-dimethyllysine; alternate. Residues lysine 603, lysine 609, and lysine 613 each carry the N6-acetyllysine; alternate modification. Residues lysine 603, lysine 609, and lysine 613 each participate in a glycyl lysine isopeptide (Lys-Gly) (interchain with G-Cter in ubiquitin); alternate cross-link. A Phosphoserine modification is found at serine 616. N6-acetyllysine; alternate is present on residues lysine 623, lysine 635, and lysine 639. Glycyl lysine isopeptide (Lys-Gly) (interchain with G-Cter in ubiquitin); alternate cross-links involve residues lysine 623, lysine 635, and lysine 639. Residue arginine 641 is modified to Omega-N-methylarginine. Serine 644 is modified (phosphoserine). Lysine 645 participates in a covalent cross-link: Glycyl lysine isopeptide (Lys-Gly) (interchain with G-Cter in ubiquitin). Residue serine 648 is modified to Phosphoserine. Residue lysine 661 is modified to N6-acetyllysine; alternate. A Glycyl lysine isopeptide (Lys-Gly) (interchain with G-Cter in ubiquitin); alternate cross-link involves residue lysine 661. Lysine 667 participates in a covalent cross-link: Glycyl lysine isopeptide (Lys-Gly) (interchain with G-Cter in ubiquitin). Lysine 677 carries the N6-acetyllysine; alternate modification. Residue lysine 677 forms a Glycyl lysine isopeptide (Lys-Gly) (interchain with G-Cter in ubiquitin); alternate linkage. Position 686 is a phosphotyrosine (tyrosine 686). Position 688 is a phosphoserine (serine 688). The disordered stretch occupies residues 690–709 (VVSGDTSPRHLSNVSSTGSI). The residue at position 692 (serine 692) is a Phosphoserine; alternate. A glycan (O-linked (GlcNAc...) serine; alternate) is linked at serine 692. The span at 693–708 (GDTSPRHLSNVSSTGS) shows a compositional bias: polar residues. Position 695 is a phosphothreonine (threonine 695). Serine 696, serine 701, serine 708, and serine 714 each carry phosphoserine. At threonine 719 the chain carries Phosphothreonine.

In terms of assembly, interacts with MARK1, MARK2, MARK3 and MARK4. Interacts with SQSTM1 when polyubiquitinated. Interacts with PSMC2 through SQSTM1. Interacts with FKBP4. Binds to CSNK1D. Interacts with SGK1. Interacts with EPM2A; the interaction dephosphorylates MAPT at Ser-369. Interacts with PIN1. Interacts with LRRK2. Interacts with LRP1, leading to endocytosis; this interaction is reduced in the presence of LRPAP1/RAP. Post-translationally, polyubiquitinated. Requires functional TRAF6 and may provoke SQSTM1-dependent degradation by the proteasome. In terms of processing, phosphorylation at various serine and threonine residues in S-P or T-P motifs by proline-directed protein kinases (PDPK1, CDK1, CDK5, GSK3, MAPK) (a few sites per protein in interphase, more in mitosis), and at serine residues in K-X-G-S motifs by MAP/microtubule affinity-regulating kinase (MARK1, MARK2, MARK3, MARK4), causing detachment from microtubules, and their disassembly. Phosphorylated by PHK. Dephosphorylation at several serine and threonine residues by the serine/threonine phosphatase PPP5C. Phosphorylation at Ser-554 by BRSK1 and BRSK2 in neurons affects ability to bind microtubules and plays a role in neuron polarization. Phosphorylation at Ser-188 by SGK1 mediates microtubule depolymerization and neurite formation in hippocampal neurons. Expressed in neurons and at a lower level in the liver and kidney. Isoform PNS-tau is expressed in the peripheral nervous system while the others are expressed in the central nervous system.

It is found in the cytoplasm. The protein resides in the cytosol. The protein localises to the cell membrane. Its subcellular location is the cytoskeleton. It localises to the cell projection. It is found in the axon. The protein resides in the dendrite. The protein localises to the secreted. Promotes microtubule assembly and stability, and might be involved in the establishment and maintenance of neuronal polarity. The C-terminus binds axonal microtubules while the N-terminus binds neural plasma membrane components, suggesting that tau functions as a linker protein between both. Axonal polarity is predetermined by tau localization (in the neuronal cell) in the domain of the cell body defined by the centrosome. The short isoforms allow plasticity of the cytoskeleton whereas the longer isoforms may preferentially play a role in its stabilization. The chain is Microtubule-associated protein tau from Mus musculus (Mouse).